Reading from the N-terminus, the 179-residue chain is ATP-dependent protease subunit HslV (179 aa).

Residue threonine 8 is part of the active site. Glycine 163, cysteine 166, and threonine 169 together coordinate Na(+).

Belongs to the peptidase T1B family. HslV subfamily. In terms of assembly, a double ring-shaped homohexamer of HslV is capped on each side by a ring-shaped HslU homohexamer. The assembly of the HslU/HslV complex is dependent on binding of ATP.

It is found in the cytoplasm. It catalyses the reaction ATP-dependent cleavage of peptide bonds with broad specificity.. Its activity is regulated as follows. Allosterically activated by HslU binding. Its function is as follows. Protease subunit of a proteasome-like degradation complex believed to be a general protein degrading machinery. The chain is ATP-dependent protease subunit HslV from Solibacter usitatus (strain Ellin6076).